A 374-amino-acid chain; its full sequence is Ribosomal large subunit pseudouridine synthase D (374 aa).

A disordered region spans residues 1–20 (MQNTSFDNESDYSDDSDFAS). Residues 8–17 (NESDYSDDSD) show a composition bias toward acidic residues. Residues 39–112 (GRLDAVLAKL…MALDIVYEDD (74 aa)) form the S4 RNA-binding domain. The active site involves Asp-160.

Belongs to the pseudouridine synthase RluA family.

It is found in the cytoplasm. The catalysed reaction is uridine(1911/1915/1917) in 23S rRNA = pseudouridine(1911/1915/1917) in 23S rRNA. In terms of biological role, responsible for synthesis of pseudouridine from uracil at positions 1911, 1915 and 1917 in 23S ribosomal RNA. In Neisseria meningitidis serogroup A / serotype 4A (strain DSM 15465 / Z2491), this protein is Ribosomal large subunit pseudouridine synthase D (rluD).